A 556-amino-acid chain; its full sequence is MNRRLDNQRVIRAPHGSDISAKSWLTEAPLRMLMNNLDPDVAEKPSELIVYGGIGRAARDWDSFDRIVASLRKLEADQTLVVQSGKPVGIFRTHPDAPRVLIANSNIVPHWATLDHFNALDKMGLMMYGQMTAGSWIYIGSQGIVQGTYETFVEVGRRHYNGDLSGKWILTAGLGGMGGAQPLAATMAGASMLAVECQPSRIEMRLRTGYLDRQAASLDEALALMEEAARTKTAVSVGLLGNAAEIFPELVRRGVRPDIVTDQTSAHDPINGYLPKGWTLAEWEAKRASEPKAVEQASKTSMVGHVQAMLDFHAMGIPTLDYGNNIRQMAKDMGLANAFDFPGFVPAYIRPLFCRGIGPFRWAALSGDPEDIYKTDAKVKELLPDNKHLHNWLDMARQRIKFQGLPARICWVGLGDRHRLGLAFNEMVARGELKAPIVIGRDHLDSGSVASPNRETEAMKDGSDAVSDWPLLNALLNCASGATWVSLHHGGGVGIGYSQHAGMVIVADGTDDAARRLERVLWNDPATGVMRHADAGYDDAIGCAEANGLDLPSLAR.

Residues 52 to 53, glutamine 130, 176 to 178, glutamate 196, arginine 201, 242 to 243, 263 to 267, 273 to 274, and tyrosine 322 each bind NAD(+); these read GG, GMG, NA, QTSAH, and YL. Cysteine 410 is an active-site residue. NAD(+) is bound at residue glycine 492.

This sequence belongs to the urocanase family. NAD(+) is required as a cofactor.

The protein localises to the cytoplasm. The catalysed reaction is 4-imidazolone-5-propanoate = trans-urocanate + H2O. It functions in the pathway amino-acid degradation; L-histidine degradation into L-glutamate; N-formimidoyl-L-glutamate from L-histidine: step 2/3. In terms of biological role, catalyzes the conversion of urocanate to 4-imidazolone-5-propionate. The protein is Urocanate hydratase of Bradyrhizobium sp. (strain ORS 278).